We begin with the raw amino-acid sequence, 176 residues long: MAERSTGLPSQRQVVELLDGEFTRAGYDLEDVVIDAASRPPRITVVTDSDHGLDLDSVAELSRIASELLDGLDSAPYVLEVTSPGVDRPLTTEKHYRRARGRLAEITLTDGSVLTGRIGGVADGTVGVVVREGRSNLSVREIALNAIAKAVVQVEFSPPSPRELELAGVSRKEARA.

Belongs to the RimP family.

The protein resides in the cytoplasm. Functionally, required for maturation of 30S ribosomal subunits. This chain is Ribosome maturation factor RimP, found in Mycolicibacterium vanbaalenii (strain DSM 7251 / JCM 13017 / BCRC 16820 / KCTC 9966 / NRRL B-24157 / PYR-1) (Mycobacterium vanbaalenii).